A 393-amino-acid polypeptide reads, in one-letter code: ATP phosphoribosyltransferase regulatory subunit (393 aa).

It belongs to the class-II aminoacyl-tRNA synthetase family. HisZ subfamily. In terms of assembly, heteromultimer composed of HisG and HisZ subunits.

The protein resides in the cytoplasm. Its pathway is amino-acid biosynthesis; L-histidine biosynthesis; L-histidine from 5-phospho-alpha-D-ribose 1-diphosphate: step 1/9. In terms of biological role, required for the first step of histidine biosynthesis. May allow the feedback regulation of ATP phosphoribosyltransferase activity by histidine. In Shouchella clausii (strain KSM-K16) (Alkalihalobacillus clausii), this protein is ATP phosphoribosyltransferase regulatory subunit.